We begin with the raw amino-acid sequence, 123 residues long: MARIKVHELREKSKADLSGQLKEFKAELALLRVAKVTGGAPNKLSKIKVVRKSIAQVLTVISQKQKSALREAYKNKKLLPLDLRPKKTRAIRRRLTKHQASLKTEREKKKEMYFPIRKYAIKV.

This sequence belongs to the universal ribosomal protein uL29 family.

The protein is Large ribosomal subunit protein uL29y (RPL35B) of Arabidopsis thaliana (Mouse-ear cress).